The chain runs to 114 residues: Ribonuclease P protein component (114 aa).

This sequence belongs to the RnpA family. As to quaternary structure, consists of a catalytic RNA component (M1 or rnpB) and a protein subunit.

The catalysed reaction is Endonucleolytic cleavage of RNA, removing 5'-extranucleotides from tRNA precursor.. Functionally, RNaseP catalyzes the removal of the 5'-leader sequence from pre-tRNA to produce the mature 5'-terminus. It can also cleave other RNA substrates such as 4.5S RNA. The protein component plays an auxiliary but essential role in vivo by binding to the 5'-leader sequence and broadening the substrate specificity of the ribozyme. This is Ribonuclease P protein component from Alkaliphilus oremlandii (strain OhILAs) (Clostridium oremlandii (strain OhILAs)).